The chain runs to 1596 residues: Protein son of sevenless (1596 aa).

Positions 248–434 constitute a DH domain; the sequence is TYEETVKELI…HPLHCDLEKV (187 aa). One can recognise a PH domain in the interval 480–588; that stretch reads EFIREDSLSK…WMADLLMVIT (109 aa). One can recognise an N-terminal Ras-GEF domain in the interval 637-792; sequence GVPMIKGATL…SVLKIVQRKN (156 aa). One can recognise a Ras-GEF domain in the interval 829-1066; that stretch reads HPLELARQLT…YNESLRIEPR (238 aa). 5 disordered regions span residues 1073-1105, 1175-1212, 1235-1291, 1340-1392, and 1465-1596; these read KFPR…LSNS, RNTS…AHVW, EHLP…TAST, RAVP…NHST, and PLPI…TNEE. Over residues 1096-1105 the composition is skewed to low complexity; that stretch reads TNSSSKLSNS. Polar residues-rich tracts occupy residues 1175 to 1195 and 1280 to 1291; these read RNTS…NNGE and MQNSPTHSTAST. Residues 1352–1366 are compositionally biased toward basic and acidic residues; the sequence is ERTESCADMAQKRQA. Residues 1469-1489 show a composition bias toward low complexity; sequence SPAASSSTTTSPLTPAMSPMS. Basic residues predominate over residues 1526 to 1542; the sequence is HHQHHATHLPHHPHQHH. Residues serine 1550 and serine 1551 each carry the phosphoserine modification.

As to quaternary structure, may form a complex with sevenless and DRK.

Functionally, promotes the exchange of Ras-bound GDP by GTP. Functions in signaling pathways initiated by the sevenless and epidermal growth factor receptor tyrosine kinases; implies a role for the ras pathway in neuronal development. In Drosophila melanogaster (Fruit fly), this protein is Protein son of sevenless (Sos).